The following is a 345-amino-acid chain: NADH-quinone oxidoreductase subunit H (345 aa).

The Lumenal portion of the chain corresponds to Met1–Leu15. A helical transmembrane segment spans residues Leu16–Trp35. Residues Gly36 to Leu86 lie on the Cytoplasmic side of the membrane. The helical transmembrane segment at Ala87–Glu106 threads the bilayer. Topologically, residues Gly107–Met110 are lumenal. The helical transmembrane segment at Ala111–Gly130 threads the bilayer. Residues Val131–Ser156 are Cytoplasmic-facing. Residues Tyr157 to Asn176 form a helical membrane-spanning segment. Residues Leu177–Leu191 lie on the Lumenal side of the membrane. Residues Asn192–Ala211 form a helical membrane-spanning segment. Residues Glu212–Ala245 lie on the Cytoplasmic side of the membrane. The chain crosses the membrane as a helical span at residues Gly246–Gly265. Residues Trp266 to Gly276 are Lumenal-facing. The helical transmembrane segment at Val277 to Ala296 threads the bilayer. At Ile297–Val313 the chain is on the cytoplasmic side. The helical transmembrane segment at Phe314–Val333 threads the bilayer. Residues Leu334–Ala345 are Lumenal-facing.

This sequence belongs to the complex I subunit 1 family. NDH-1 is composed of 14 different subunits. Subunits NuoA, H, J, K, L, M, N constitute the membrane sector of the complex.

The protein resides in the cellular chromatophore membrane. It catalyses the reaction a quinone + NADH + 5 H(+)(in) = a quinol + NAD(+) + 4 H(+)(out). NDH-1 shuttles electrons from NADH, via FMN and iron-sulfur (Fe-S) centers, to quinones in the respiratory chain. The immediate electron acceptor for the enzyme in this species is believed to be ubiquinone. Couples the redox reaction to proton translocation (for every two electrons transferred, four hydrogen ions are translocated across the cytoplasmic membrane), and thus conserves the redox energy in a proton gradient. This subunit may bind ubiquinone. This chain is NADH-quinone oxidoreductase subunit H, found in Rhodobacter capsulatus (Rhodopseudomonas capsulata).